The following is a 341-amino-acid chain: tRNA N6-adenosine threonylcarbamoyltransferase (341 aa).

Fe cation-binding residues include His-111 and His-115. Substrate-binding positions include Ala-133 to Gly-137, Asp-166, Gly-179, Asp-183, and Asn-273. Asp-301 contacts Fe cation.

It belongs to the KAE1 / TsaD family. Fe(2+) serves as cofactor.

The protein resides in the cytoplasm. The enzyme catalyses L-threonylcarbamoyladenylate + adenosine(37) in tRNA = N(6)-L-threonylcarbamoyladenosine(37) in tRNA + AMP + H(+). Required for the formation of a threonylcarbamoyl group on adenosine at position 37 (t(6)A37) in tRNAs that read codons beginning with adenine. Is involved in the transfer of the threonylcarbamoyl moiety of threonylcarbamoyl-AMP (TC-AMP) to the N6 group of A37, together with TsaE and TsaB. TsaD likely plays a direct catalytic role in this reaction. This Geotalea daltonii (strain DSM 22248 / JCM 15807 / FRC-32) (Geobacter daltonii) protein is tRNA N6-adenosine threonylcarbamoyltransferase.